The primary structure comprises 242 residues: 7-cyano-7-deazaguanine synthase (242 aa).

Positions 1–25 (MNSRKDKNSKGKNSDTKRKKSSQEN) are disordered. Residue 32-42 (LSGGLDSTTCL) coordinates ATP. Residues Cys212, Cys221, Cys224, and Cys227 each contribute to the Zn(2+) site.

The protein belongs to the QueC family. The cofactor is Zn(2+).

The catalysed reaction is 7-carboxy-7-deazaguanine + NH4(+) + ATP = 7-cyano-7-deazaguanine + ADP + phosphate + H2O + H(+). Its pathway is purine metabolism; 7-cyano-7-deazaguanine biosynthesis. In terms of biological role, catalyzes the ATP-dependent conversion of 7-carboxy-7-deazaguanine (CDG) to 7-cyano-7-deazaguanine (preQ(0)). The protein is 7-cyano-7-deazaguanine synthase of Leptospira borgpetersenii serovar Hardjo-bovis (strain JB197).